A 417-amino-acid polypeptide reads, in one-letter code: Serine hydroxymethyltransferase (417 aa).

Residues L120 and 124-126 (GHL) contribute to the (6S)-5,6,7,8-tetrahydrofolate site. The residue at position 229 (K229) is an N6-(pyridoxal phosphate)lysine.

It belongs to the SHMT family. In terms of assembly, homodimer. Pyridoxal 5'-phosphate serves as cofactor.

Its subcellular location is the cytoplasm. It catalyses the reaction (6R)-5,10-methylene-5,6,7,8-tetrahydrofolate + glycine + H2O = (6S)-5,6,7,8-tetrahydrofolate + L-serine. It participates in one-carbon metabolism; tetrahydrofolate interconversion. Its pathway is amino-acid biosynthesis; glycine biosynthesis; glycine from L-serine: step 1/1. Catalyzes the reversible interconversion of serine and glycine with tetrahydrofolate (THF) serving as the one-carbon carrier. This reaction serves as the major source of one-carbon groups required for the biosynthesis of purines, thymidylate, methionine, and other important biomolecules. Also exhibits THF-independent aldolase activity toward beta-hydroxyamino acids, producing glycine and aldehydes, via a retro-aldol mechanism. The polypeptide is Serine hydroxymethyltransferase (Anaeromyxobacter dehalogenans (strain 2CP-1 / ATCC BAA-258)).